The chain runs to 158 residues: Phosphopantetheine adenylyltransferase (158 aa).

Threonine 9 serves as a coordination point for substrate. Residues 9 to 10 (TF) and histidine 17 contribute to the ATP site. 3 residues coordinate substrate: lysine 41, leucine 73, and arginine 87. Residues 88–90 (GVR), glutamate 98, and 123–129 (WSYVSST) each bind ATP.

It belongs to the bacterial CoaD family. As to quaternary structure, homohexamer. Requires Mg(2+) as cofactor.

It localises to the cytoplasm. The enzyme catalyses (R)-4'-phosphopantetheine + ATP + H(+) = 3'-dephospho-CoA + diphosphate. It participates in cofactor biosynthesis; coenzyme A biosynthesis; CoA from (R)-pantothenate: step 4/5. Reversibly transfers an adenylyl group from ATP to 4'-phosphopantetheine, yielding dephospho-CoA (dPCoA) and pyrophosphate. In Pasteurella multocida (strain Pm70), this protein is Phosphopantetheine adenylyltransferase.